The primary structure comprises 335 residues: Fructose-1,6-bisphosphatase class 1 (335 aa).

Mg(2+) contacts are provided by Glu94, Asp113, Leu115, and Asp116. Residues 116-119 (DGSS), Asn208, and Lys274 contribute to the substrate site. Glu280 serves as a coordination point for Mg(2+).

It belongs to the FBPase class 1 family. As to quaternary structure, homotetramer. Mg(2+) is required as a cofactor.

The protein resides in the cytoplasm. The catalysed reaction is beta-D-fructose 1,6-bisphosphate + H2O = beta-D-fructose 6-phosphate + phosphate. The protein operates within carbohydrate biosynthesis; gluconeogenesis. This is Fructose-1,6-bisphosphatase class 1 from Polynucleobacter asymbioticus (strain DSM 18221 / CIP 109841 / QLW-P1DMWA-1) (Polynucleobacter necessarius subsp. asymbioticus).